A 496-amino-acid polypeptide reads, in one-letter code: MARKMLKDEEVEVAVTDGGSYDYDLFVIGAGSGGVRGSRTSASFGAKVAICELPFHPISSDWQGGHGGTCVIRGCVPKKILVYGSSFRGEFEDAKNFGWEINGDINFNWKRLLENKTQEIVRLNGVYQRILGNSGVTMIEGAGSLVDAHTVEVTKPDGSKQRYTAKHILIATGSRAQRVNIPGKELAITSDEALSLEELPKRAVILGGGYIAVEFASIWKGMGAHVDLFYRKELPLRGFDDEMRTVVASNLEGRGIRLHPGTNLSELSKTADGIKVVTDKGEEIIADVVLFATGRTPNSQRLNLEAAGVEVDNIGAIKVDDYSRTSVPNIWAVGDVTNRINLTPVALMEATCFSKTVFGGQPTKPDYRDVPCAVFSIPPLSVVGLSEQQALEEAKSDVLVYTSSFNPMKNSISKRQEKTVMKLVVDSETDKVLGASMCGPDAPEIIQGMAVALKCGATKATFDSTVGIHPSAAEEFVTMRTLTRRVSPSSKPKTNL.

Residues S32, G33, E52, T69, C70, and K78 each coordinate FAD. S32 contacts glutathione. C70 and C75 are joined by a disulfide. Y127 lines the glutathione pocket. G143 lines the FAD pocket. The NADP(+) site is built by G208, I211, E214, R231, R237, and G294. Residues D335 and T343 each coordinate FAD. Residue A373 coordinates NADP(+). FAD is bound at residue H469. The active-site Proton acceptor is the H469.

It belongs to the class-I pyridine nucleotide-disulfide oxidoreductase family. In terms of assembly, homodimer. The cofactor is FAD.

It localises to the cytoplasm. It catalyses the reaction 2 glutathione + NADP(+) = glutathione disulfide + NADPH + H(+). Functionally, catalyzes the reduction of glutathione disulfide (GSSG) to reduced glutathione (GSH). Constitutes the major mechanism to maintain a high GSH:GSSG ratio in the cytosol. The protein is Glutathione reductase, cytosolic (GRC2) of Oryza sativa subsp. japonica (Rice).